The following is a 396-amino-acid chain: Diphosphomevalonate decarboxylase (396 aa).

(R)-5-diphosphomevalonate-binding positions include 19–22 (YWGK), R74, 153–158 (SGSACR), and T209.

It belongs to the diphosphomevalonate decarboxylase family. Homodimer.

The catalysed reaction is (R)-5-diphosphomevalonate + ATP = isopentenyl diphosphate + ADP + phosphate + CO2. Its pathway is isoprenoid biosynthesis; isopentenyl diphosphate biosynthesis via mevalonate pathway; isopentenyl diphosphate from (R)-mevalonate: step 3/3. Its function is as follows. Diphosphomevalonate decarboxylase; part of the second module of ergosterol biosynthesis pathway that includes the middle steps of the pathway. MVD1/ERG19 converts diphosphomevalonate into isopentenyl diphosphate. The second module is carried out in the vacuole and involves the formation of farnesyl diphosphate, which is also an important intermediate in the biosynthesis of ubiquinone, dolichol, heme and prenylated proteins. Activity by the mevalonate kinase ERG12 first converts mevalonate into 5-phosphomevalonate. 5-phosphomevalonate is then further converted to 5-diphosphomevalonate by the phosphomevalonate kinase ERG8. The diphosphomevalonate decarboxylase MVD1/ERG19 then produces isopentenyl diphosphate. The isopentenyl-diphosphate delta-isomerase IDI1 then catalyzes the 1,3-allylic rearrangement of the homoallylic substrate isopentenyl (IPP) to its highly electrophilic allylic isomer, dimethylallyl diphosphate (DMAPP). Finally the farnesyl diphosphate synthase ERG20 catalyzes the sequential condensation of isopentenyl pyrophosphate with dimethylallyl pyrophosphate, and then with the resultant geranylpyrophosphate to the ultimate product farnesyl pyrophosphate. This chain is Diphosphomevalonate decarboxylase, found in Saccharomyces cerevisiae (strain ATCC 204508 / S288c) (Baker's yeast).